A 419-amino-acid polypeptide reads, in one-letter code: Transcription termination factor Rho (419 aa).

Positions 48 to 123 constitute a Rho RNA-BD domain; it reads DIFGDGVLEI…LKVNEVNYDK (76 aa). RNA-binding regions lie at residues 61-66, 78-80, and 108-110; these read GFGFLR, DIY, and ERY. ATP-binding positions include 169–174, 181–186, and Arg212; these read GRGQRG and KAGKTM. Residues 284-288 are RNA-binding 2; sequence VLTGG.

This sequence belongs to the Rho family. In terms of assembly, homohexamer. The homohexamer assembles into an open ring structure.

Facilitates transcription termination by a mechanism that involves Rho binding to the nascent RNA, activation of Rho's RNA-dependent ATPase activity, and release of the mRNA from the DNA template. The chain is Transcription termination factor Rho from Salmonella typhi.